We begin with the raw amino-acid sequence, 62 residues long: Probable tautomerase RSc0807 (62 aa).

Pro-2 serves as the catalytic Proton acceptor; via imino nitrogen.

Belongs to the 4-oxalocrotonate tautomerase family.

The protein is Probable tautomerase RSc0807 of Ralstonia nicotianae (strain ATCC BAA-1114 / GMI1000) (Ralstonia solanacearum).